Reading from the N-terminus, the 207-residue chain is Holliday junction branch migration complex subunit RuvA (207 aa).

A domain I region spans residues 1–63 (MIGMLKGRVE…QDAITLFGFL (63 aa)). The segment at 64–142 (DARSKRMFLQ…VDKIETGEPT (79 aa)) is domain II. Residues 143–153 (STQRIPTDKGV) form a flexible linker region. Positions 153–207 (VEQVVEGLMSLGWKQADAQQAVDSVISSSGIALPLEEGNVPTVLRLALTSLDRGR) are domain III.

This sequence belongs to the RuvA family. As to quaternary structure, homotetramer. Forms an RuvA(8)-RuvB(12)-Holliday junction (HJ) complex. HJ DNA is sandwiched between 2 RuvA tetramers; dsDNA enters through RuvA and exits via RuvB. An RuvB hexamer assembles on each DNA strand where it exits the tetramer. Each RuvB hexamer is contacted by two RuvA subunits (via domain III) on 2 adjacent RuvB subunits; this complex drives branch migration. In the full resolvosome a probable DNA-RuvA(4)-RuvB(12)-RuvC(2) complex forms which resolves the HJ.

It localises to the cytoplasm. The RuvA-RuvB-RuvC complex processes Holliday junction (HJ) DNA during genetic recombination and DNA repair, while the RuvA-RuvB complex plays an important role in the rescue of blocked DNA replication forks via replication fork reversal (RFR). RuvA specifically binds to HJ cruciform DNA, conferring on it an open structure. The RuvB hexamer acts as an ATP-dependent pump, pulling dsDNA into and through the RuvAB complex. HJ branch migration allows RuvC to scan DNA until it finds its consensus sequence, where it cleaves and resolves the cruciform DNA. This chain is Holliday junction branch migration complex subunit RuvA, found in Bifidobacterium animalis subsp. lactis (strain AD011).